A 347-amino-acid polypeptide reads, in one-letter code: Probable E3 ubiquitin-protein ligase DTX3 (347 aa).

The tract at residues Gly-111–Ala-157 is disordered. The span at Pro-120–Pro-151 shows a compositional bias: pro residues. The RING-type zinc-finger motif lies at Cys-164 to Phe-205.

The protein belongs to the Deltex family. As to quaternary structure, homodimer. May form a heterodimer with other members of the Deltex family. Interacts with NOTCH1. As to expression, strongly expressed in testis and brain. Weakly expressed in kidney.

The protein localises to the cytoplasm. It catalyses the reaction S-ubiquitinyl-[E2 ubiquitin-conjugating enzyme]-L-cysteine + [acceptor protein]-L-lysine = [E2 ubiquitin-conjugating enzyme]-L-cysteine + N(6)-ubiquitinyl-[acceptor protein]-L-lysine.. It functions in the pathway protein modification; protein ubiquitination. Regulator of Notch signaling, a signaling pathway involved in cell-cell communications that regulates a broad spectrum of cell-fate determinations. Probably acts both as a positive and negative regulator of Notch, depending on the developmental and cell context. Functions as a ubiquitin ligase protein in vitro, suggesting that it may regulate the Notch pathway via some ubiquitin ligase activity. This is Probable E3 ubiquitin-protein ligase DTX3 (Dtx3) from Mus musculus (Mouse).